We begin with the raw amino-acid sequence, 394 residues long: S-adenosylmethionine synthase (394 aa).

H16 is a binding site for ATP. D18 is a Mg(2+) binding site. E44 is a K(+) binding site. E57 and Q99 together coordinate L-methionine. The tract at residues 99–109 (QSPDIAQGVDE) is flexible loop. Residues 173–175 (DAK), 240–241 (RF), D249, 255–256 (RK), A272, and K276 contribute to the ATP site. Residue D249 participates in L-methionine binding. K280 is a binding site for L-methionine.

It belongs to the AdoMet synthase family. In terms of assembly, homotetramer; dimer of dimers. Requires Mg(2+) as cofactor. It depends on K(+) as a cofactor.

It localises to the cytoplasm. It carries out the reaction L-methionine + ATP + H2O = S-adenosyl-L-methionine + phosphate + diphosphate. It functions in the pathway amino-acid biosynthesis; S-adenosyl-L-methionine biosynthesis; S-adenosyl-L-methionine from L-methionine: step 1/1. Its function is as follows. Catalyzes the formation of S-adenosylmethionine (AdoMet) from methionine and ATP. The overall synthetic reaction is composed of two sequential steps, AdoMet formation and the subsequent tripolyphosphate hydrolysis which occurs prior to release of AdoMet from the enzyme. This Lacticaseibacillus paracasei (strain ATCC 334 / BCRC 17002 / CCUG 31169 / CIP 107868 / KCTC 3260 / NRRL B-441) (Lactobacillus paracasei) protein is S-adenosylmethionine synthase.